The primary structure comprises 141 residues: Phage-like element PBSX protein XkdS (141 aa).

The protein to B.subtilis YqbS.

The sequence is that of Phage-like element PBSX protein XkdS (xkdS) from Bacillus subtilis (strain 168).